Consider the following 308-residue polypeptide: Ribonuclease Z (308 aa).

Residues histidine 60, histidine 62, aspartate 64, histidine 65, histidine 140, aspartate 209, and histidine 269 each contribute to the Zn(2+) site. Aspartate 64 serves as the catalytic Proton acceptor.

The protein belongs to the RNase Z family. In terms of assembly, homodimer. The cofactor is Zn(2+).

The catalysed reaction is Endonucleolytic cleavage of RNA, removing extra 3' nucleotides from tRNA precursor, generating 3' termini of tRNAs. A 3'-hydroxy group is left at the tRNA terminus and a 5'-phosphoryl group is left at the trailer molecule.. In terms of biological role, zinc phosphodiesterase, which displays some tRNA 3'-processing endonuclease activity. Probably involved in tRNA maturation, by removing a 3'-trailer from precursor tRNA. This chain is Ribonuclease Z, found in Methanococcus maripaludis (strain DSM 14266 / JCM 13030 / NBRC 101832 / S2 / LL).